Consider the following 196-residue polypeptide: Sesquiterpene phosphatase astK (196 aa).

This sequence belongs to the HAD-like hydrolase superfamily.

The catalysed reaction is (S,S)-drim-8-en-11-yl phosphate + H2O = (S,S)-drim-8-en-11-ol + phosphate. Its pathway is secondary metabolite biosynthesis; terpenoid biosynthesis. Sesquiterpene phosphatase; part of the gene cluster that mediates the biosynthesis of astellolides, drimane-type sesquiterpene esters that show antimicrobial, anti-inflammatory, and anti-tumor activities. The first step in astellolide biosynthesis is performed by the sesquiterpene cyclase astC that catalyzes the formation of drimanyl pyrophosphate from farnesyl pyrophosphate. Drimanyl pyrophosphate is then dephosphorylated by the sesquiterpene phosphatase astI to produce drimanyl monophosphate which is further dephosphorylated to drim-8-ene-11-ol by atsK. Drim-8-ene-11-ol is converted to confertifolin, probably by the cytochrome P450 monooxygenase astD and/or the dehydrogenase astE. The cytochrome P450 monooxygenases astB, astF and astJ then hydroxylate confertifolin at C6, C14, or C15 to form trihydroxy confertifolin. The nonribosomal peptide synthetase astA catalyzes ester bond formation between trihydroxy contifolin and benzoic acid (BA) or 4-hydroxy benzoic acid (4HBA), leading to the formation of dideacetyl astellolides A and B, respectively. Finally, the O-acetyltransferase astG converts dideacetyl astellolides A and B into deacetyl astellolides A and B. The chain is Sesquiterpene phosphatase astK from Aspergillus oryzae (strain ATCC 42149 / RIB 40) (Yellow koji mold).